The sequence spans 1937 residues: Myosin-8 (1937 aa).

Residues 35–84 enclose the Myosin N-terminal SH3-like domain; it reads DAKTSVFVAEPKESYVKSTIQSKEGGKVTVKTEGGATLTVREDQVFPMNP. 2 positions are modified to phosphothreonine: Thr-66 and Thr-71. The Myosin motor domain occupies 88–781; that stretch reads DKIEDMAMMT…LLGLLEEMRD (694 aa). Lys-132 is modified (N6,N6,N6-trimethyllysine). 181–188 is an ATP binding site; that stretch reads GESGAGKT. Tyr-389 carries the post-translational modification Phosphotyrosine. Ser-392 is modified (phosphoserine). At Thr-419 the chain carries Phosphothreonine. A Phosphotyrosine modification is found at Tyr-424. Position 625 is a phosphoserine (Ser-625). Positions 658 to 680 are actin-binding; sequence LNKLMTNLRSTHPHFVRCIIPNE. The residue at position 756 (His-756) is a Pros-methylhistidine. Residues 760-774 form an actin-binding region; sequence KFGHTKVFFKAGLLG. In terms of domain architecture, IQ spans 781–813; sequence DEKLAQIITRTQAVCRGFLMRVEYQKMLQRREA. Residues 842-1937 adopt a coiled-coil conformation; that stretch reads LLKSAETEKE…REVHTKISAE (1096 aa). A phosphoserine mark is found at Ser-1091 and Ser-1095. The interval 1126–1146 is disordered; that stretch reads EAERASRAKAEKQRSDLSREL. Basic and acidic residues predominate over residues 1127-1146; it reads AERASRAKAEKQRSDLSREL. Residues Ser-1161, Ser-1236, Ser-1242, and Ser-1260 each carry the phosphoserine modification. A phosphothreonine mark is found at Thr-1264 and Thr-1285. Phosphoserine is present on residues Ser-1291, Ser-1302, and Ser-1305. Tyr-1463 carries the phosphotyrosine modification. Thr-1466 bears the Phosphothreonine mark. Phosphoserine is present on Ser-1473. Position 1491 is a phosphotyrosine (Tyr-1491). Position 1494 is a phosphoserine (Ser-1494). Phosphothreonine is present on Thr-1500. Phosphoserine is present on Ser-1513. Thr-1516 bears the Phosphothreonine mark. 5 positions are modified to phosphoserine: Ser-1553, Ser-1573, Ser-1602, Ser-1713, and Ser-1725. Thr-1729 carries the post-translational modification Phosphothreonine. Ser-1738 is subject to Phosphoserine.

It belongs to the TRAFAC class myosin-kinesin ATPase superfamily. Myosin family. As to quaternary structure, muscle myosin is a hexameric protein that consists of 2 heavy chain subunits (MHC), 2 alkali light chain subunits (MLC) and 2 regulatory light chain subunits (MLC-2).

It localises to the cytoplasm. It is found in the myofibril. Its function is as follows. Muscle contraction. The sequence is that of Myosin-8 (MYH8) from Homo sapiens (Human).